Reading from the N-terminus, the 1818-residue chain is MSSLASQLQSINEKTASVALDRKQRSKLHSRSLIFDPKQAATQDYEYIYEIATEGLEDLCELDSRFNKFKSTLFSETSVNLDRNLQTKDVISQLDKNIDAFLTLVGPYYGLTSSLKAVEWLVRRFHANIHNAELMILTALPYFQHPVFVKVLNVIPKQNLPQIFEWLVGYKDQLKTPPASSILKAFRNDFHFFNFYSKFLNDQIKNHTVYKEQLVFYLSNTVQLLASFSKNIEELNETHIPVVLETTALMLLPQQKPKYSSSINSDLKLTSYSIISVLSSIFPFSADILKSLTVSILEDEDALKGFTKPTLIVLSQLWKHFQGNLEVIEAFKNFKIGQHELGVLDELKNENYQLSTFIILVFISTFPSNESYKLLPFIDLSNKTVFEIITKLVLQNSTTQEDSIRSNLTKIAQSLTKSDPKLFQTTLESENWKVDELELKLMSVLVESKNDEAEFDAGDEDNAVEDIEIVKTVDFTKLQSTAKSYFNTEYDEEFNLVLKELKSVLSASDAKLHVSVILTFLQKVFSTPEVALTFAFRVALTPAVPLSIRLSAIKSIRIKIKNAANGKTDFYLLIPLILLALFDNSKLIRSGFAQLLRLVIEIKTKLTTGAALFLEREIYGSVSDKKYPTPHDSLFLCSLLSEDNVKDTVLDPSRVINILFDSIFKAKNGKSKPGKYFRSFIFTQWSLCSLPIVLKANAWKIVAQANKAGTDDRFFFLDGDIENYFSKRNVWIDQASIAGIAFFDNAEVSVVGLVGGVASNDKNSNTESEWLCRALENPSGNLQMTANNRVLETFDTFKPIESRLKIVNKLVDILINDDIVEFDPMATLQELNIDRNLFLQALTSVQIGDQIPEQGIAKRRRRSSNSTKQAMVRDEINNMASGHLKKLTFLLEILESSLRKKRNVAGPDLLKVLFKILTDLEYLGNDGNLPVLYAQETLASCMLLNIVNLKSSSKEVKFDSNSIRADLIVNSIRASPSPQVQNRLLLVISELASLAPEVILHSVMPIFTFMGAHTVRQDDEFSSSALQQTVAKVIPALASNGLSPVNNEIEFLLASFATAFPHVPRHRRVKLFVSLTKTLGCAESMHLILFLMGQQYANNVHKNKNGDSQSVVEFVHGYMKSFSAEEQLAGIVAFTKLWNDIPLNQLEPGSEEFEVLNNRPVFGTTIATLGQSGLAVLRNDLLQFLDETLSSENKHELSSLKTKMALVLIDDEDSEVSKKESVLDKFRAITSFALASLDTFTNSHADIKLCSTLYSLLGNLLDLLPLNYFIDSIVASLDVDTLSDSLSIKVARNYAILASRKFETELNVAHCDQVVIESVINNLLPILIKGIKKNVDVELQQAYLDTFSTIVNKFGASGTEFASSDVSKVLIESLGIVTTDRGLLNEQPEVIIASINAITSIVNILGVKTLGLFPKVVPPALKIWESTNSLGDKESAKLLQGSVLVLLSCYIKKIPAFMSTTLEAVLLTILSSDLIDNHIRSSVLDLIVDHMDLAQVLKSLCNVWLTKKFYTNDNSGNIGLFLKTLQATINKMEKKQATTQATLFMRWLISAFEFRQYSEDNDNKFDNNTIHRLESSFHGCAIAFVMKLNDKSFRPLFANLVRWAVDGEGATLKTNEVSRLLAFFRFFNKLQDELKSIITSYFSYLLDPTSALLKRFSEGSLVATNLRRIILIGLTSSFKYDQDDYWSQQGRFDSICSPLLSQLSNIEDSIGKYLVKSVSTFVTDVSSDEYNETLVHELIKYISNANENSAATKIWSIRTLKTIFQKMGEQWLSYLPTLVPYIAELLEDDDEEVEMEVRRGLVRVIENVLGEPLDRYLS.

The chain crosses the membrane as a helical span at residues 568-588 (TDFYLLIPLILLALFDNSKLI). An HEAT repeat occupies 1778–1816 (LVPYIAELLEDDDEEVEMEVRRGLVRVIENVLGEPLDRY).

This sequence belongs to the HEATR1/UTP10 family. As to quaternary structure, component of the ribosomal small subunit (SSU) processome.

The protein resides in the nucleus. The protein localises to the nucleolus. It is found in the membrane. In terms of biological role, involved in nucleolar processing of pre-18S ribosomal RNA. Involved in ribosome biosynthesis. This chain is U3 small nucleolar RNA-associated protein 10, found in Candida albicans (strain SC5314 / ATCC MYA-2876) (Yeast).